The chain runs to 289 residues: Iron-sulfur cluster carrier protein (289 aa).

Positions 1–18 are enriched in low complexity; sequence MAEECSGNCDSCGSSSDC. The disordered stretch occupies residues 1-20; sequence MAEECSGNCDSCGSSSDCSD. 48 to 55 lines the ATP pocket; the sequence is GKGGVGKS.

Belongs to the Mrp/NBP35 ATP-binding proteins family. As to quaternary structure, homodimer.

Functionally, binds and transfers iron-sulfur (Fe-S) clusters to target apoproteins. Can hydrolyze ATP. The polypeptide is Iron-sulfur cluster carrier protein (Methanococcus maripaludis (strain DSM 14266 / JCM 13030 / NBRC 101832 / S2 / LL)).